The sequence spans 375 residues: 23S rRNA (uracil(747)-C(5))-methyltransferase RlmC (375 aa).

Cys-3, Cys-11, Cys-14, and Cys-87 together coordinate [4Fe-4S] cluster. S-adenosyl-L-methionine is bound by residues Gln-212, Phe-241, Glu-262, and Asn-307. Cys-334 serves as the catalytic Nucleophile.

It belongs to the class I-like SAM-binding methyltransferase superfamily. RNA M5U methyltransferase family. RlmC subfamily.

The catalysed reaction is uridine(747) in 23S rRNA + S-adenosyl-L-methionine = 5-methyluridine(747) in 23S rRNA + S-adenosyl-L-homocysteine + H(+). Functionally, catalyzes the formation of 5-methyl-uridine at position 747 (m5U747) in 23S rRNA. This is 23S rRNA (uracil(747)-C(5))-methyltransferase RlmC from Shigella dysenteriae serotype 1 (strain Sd197).